The sequence spans 135 residues: Histone H3 (135 aa).

The interval 1–40 (MARTKQTARKSTGGKAPRKAVATKARKTAPPVGGVKKPHR) is disordered. Over residues 19 to 31 (KAVATKARKTAPP) the composition is skewed to low complexity.

This sequence belongs to the histone H3 family. In terms of assembly, the nucleosome is a histone octamer containing two molecules each of H2A, H2B, H3 and H4 assembled in one H3-H4 heterotetramer and two H2A-H2B heterodimers. The octamer wraps approximately 147 bp of DNA.

The protein localises to the nucleus. The protein resides in the chromosome. Functionally, core component of nucleosome. Nucleosomes wrap and compact DNA into chromatin, limiting DNA accessibility to the cellular machineries which require DNA as a template. Histones thereby play a central role in transcription regulation, DNA repair, DNA replication and chromosomal stability. DNA accessibility is regulated via a complex set of post-translational modifications of histones, also called histone code, and nucleosome remodeling. In Mastigamoeba balamuthi (Phreatamoeba balamuthi), this protein is Histone H3.